Consider the following 78-residue polypeptide: Signal peptidase complex subunit 1 (78 aa).

Topologically, residues 1 to 18 (MNYLEGTIDFAGQLRCQK) are cytoplasmic. A helical membrane pass occupies residues 19–38 (YMNYGLCTSAVISYIYGYLV). Topologically, residues 39 to 42 (QDSY) are lumenal. Residues 43-63 (CVIKLFLILASLVALVCLPAW) traverse the membrane as a helical segment. At 64–78 (SMYNKNPLKFQKKKE) the chain is on the cytoplasmic side.

This sequence belongs to the SPCS1 family. As to quaternary structure, component of the signal peptidase complex (SPC) composed of a catalytic subunit sec11 and three accessory subunits spc1, spc2 and spc3. The complex induces a local thinning of the ER membrane which is used to measure the length of the signal peptide (SP) h-region of protein substrates. This ensures the selectivity of the complex towards h-regions shorter than 18-20 amino acids. SPC associates with the translocon complex.

It is found in the endoplasmic reticulum membrane. Its function is as follows. Component of the signal peptidase complex (SPC) which catalyzes the cleavage of N-terminal signal sequences from nascent proteins as they are translocated into the lumen of the endoplasmic reticulum. Dispensable for SPC enzymatic activity. The polypeptide is Signal peptidase complex subunit 1 (Schizosaccharomyces pombe (strain 972 / ATCC 24843) (Fission yeast)).